Consider the following 330-residue polypeptide: Src kinase-associated phosphoprotein 2-A (330 aa).

The tract at residues 53–77 (QDFQDKAETDDQEENDGFSLPPDAV) is disordered. A PH domain is found at 105-208 (DYLRAGYLEK…WINVIMNARG (104 aa)). Residues 228-261 (SHEEDIYEELPEESEKPVTGSETPKATPVPVNNT) are disordered. The segment covering 247–261 (GSETPKATPVPVNNT) has biased composition (polar residues). The SH3 domain occupies 268–329 (DYANFYRGLW…PKAYIIEMYD (62 aa)).

This sequence belongs to the SKAP family. Phosphorylated on tyrosines.

The protein localises to the cytoplasm. May be involved in B-cell and macrophage adhesion processes. May play a role in src signaling pathway. This Xenopus laevis (African clawed frog) protein is Src kinase-associated phosphoprotein 2-A (skap2-a).